A 186-amino-acid polypeptide reads, in one-letter code: Centromere protein M (186 aa).

The protein resides in the nucleus. The protein localises to the chromosome. Its subcellular location is the centromere. Probable component of a centromeric complex involved in assembly of kinetochore proteins, mitotic progression and chromosome segregation. The protein is Centromere protein M (cenpm) of Danio rerio (Zebrafish).